The primary structure comprises 212 residues: External core antigen (212 aa).

The signal sequence occupies residues 1-19 (MQLFHLCLIISCTCPTVQA). Residues 25–27 (GWL) form an HBEAG region. Residues 165–212 (NAPILSTLPETTVVRRRGRSPRRRTPSPRRRRSQSPRRRRSQSRESQC) are disordered. Residues 178–205 (VRRRGRSPRRRTPSPRRRRSQSPRRRRS) show a composition bias toward basic residues. The 1; half-length repeat unit spans residues 184–190 (SPRRRTP). The tract at residues 184 to 206 (SPRRRTPSPRRRRSQSPRRRRSQ) is 3 X 8 AA repeats of S-P-R-R-R-R-S-Q. Residues 184–212 (SPRRRTPSPRRRRSQSPRRRRSQSRESQC) constitute a propeptide that is removed on maturation. Repeat copies occupy residues 191–198 (SPRRRRSQ) and 199–206 (SPRRRRSQ).

It belongs to the orthohepadnavirus precore antigen family. As to quaternary structure, homodimerizes. Post-translationally, phosphorylated. Cleaved by host furin.

The protein localises to the secreted. It is found in the host nucleus. Functionally, may regulate immune response to the intracellular capsid in acting as a T-cell tolerogen, by having an immunoregulatory effect which prevents destruction of infected cells by cytotoxic T-cells. This immune regulation may predispose to chronicity during perinatal infections and prevent severe liver injury during adult infections. This chain is External core antigen, found in Hepatitis B virus genotype D subtype ayw (isolate Italy/CI/1992) (HBV-D).